We begin with the raw amino-acid sequence, 1622 residues long: FK506-binding protein 5 (1622 aa).

The PPIase FKBP-type domain occupies 178 to 269 (GDRVSIKYAG…IFDLEVTGSK (92 aa)). The disordered stretch occupies residues 268-306 (SKKKEGSEPSLPSLNGQPSNAPQQSLPTQLFDNSPVPQD). Positions 277–303 (SLPSLNGQPSNAPQQSLPTQLFDNSPV) are enriched in polar residues. R314 is subject to Omega-N-methylarginine. Disordered stretches follow at residues 320-432 (RATG…GFNN) and 518-538 (SPPPPVQQAPPPTPAPAPPPP). A compositionally biased stretch (low complexity) spans 335–432 (ESNSRNSHSN…NMNNNNGFNN (98 aa)). Coiled coils occupy residues 607–827 (LVQT…ETER) and 854–961 (KKEE…LESQ). 2 disordered regions span residues 1043-1097 (KQQQ…EVVV) and 1122-1622 (EEVK…VLPL). Acidic residues-rich tracts occupy residues 1050–1093 (KEEE…EEEK) and 1152–1168 (DDEDDDDDEDDYDDINE). Basic and acidic residues predominate over residues 1169-1182 (EDLKNIDAEIEKMQ). Acidic residues-rich tracts occupy residues 1185-1199 (MGDELEDDDDEEEEK) and 1222-1260 (ESEEEEEEETKVEVPVLEEEKEEEETKVEVPVLEDEQED). Residues 1261–1271 (KVESDVEEKIV) show a composition bias toward basic and acidic residues. Over residues 1320-1335 (DDDEDNEKDVASDSEE) the composition is skewed to acidic residues. Residues 1353 to 1369 (EEKVVEQVKEEINETKF) are compositionally biased toward basic and acidic residues. Residues 1380–1412 (TTTEEKEEEKEEEKVEEEEEKVVEPPTIDDDET) show a composition bias toward acidic residues. 2 stretches are compositionally biased toward low complexity: residues 1435 to 1449 (STTAATTSTTTTSST) and 1465 to 1504 (KTSFFDFDDSPFSAETETETKSTAASSDPFADTTSSTPTS). Polar residues-rich tracts occupy residues 1519-1532 (FGNSSDIFDKPSTT) and 1581-1609 (AKSNNNTPSRQKQDFSSLFGSDPTISPLT).

The protein belongs to the FKBP-type PPIase family.

It carries out the reaction [protein]-peptidylproline (omega=180) = [protein]-peptidylproline (omega=0). Its activity is regulated as follows. Inhibited by both FK506 and rapamycin. Functionally, PPIases accelerate the folding of proteins by catalyzing the cis-trans isomerization of proline imidic peptide bonds in oligopeptides. The chain is FK506-binding protein 5 (fkbp5) from Dictyostelium discoideum (Social amoeba).